The primary structure comprises 137 residues: Small ribosomal subunit protein uS12 (137 aa).

The interval 1–57 is disordered; that stretch reads MPTINQLVRKPRKSKVEKSKSPALNVGYNSRKKVQTNVSSPQKRGVATRVGTMTPKK. D102 is subject to 3-methylthioaspartic acid.

The protein belongs to the universal ribosomal protein uS12 family. Part of the 30S ribosomal subunit. Contacts proteins S8 and S17. May interact with IF1 in the 30S initiation complex.

In terms of biological role, with S4 and S5 plays an important role in translational accuracy. Functionally, interacts with and stabilizes bases of the 16S rRNA that are involved in tRNA selection in the A site and with the mRNA backbone. Located at the interface of the 30S and 50S subunits, it traverses the body of the 30S subunit contacting proteins on the other side and probably holding the rRNA structure together. The combined cluster of proteins S8, S12 and S17 appears to hold together the shoulder and platform of the 30S subunit. The protein is Small ribosomal subunit protein uS12 of Streptococcus suis (strain 98HAH33).